The sequence spans 56 residues: uncharacterized protein (56 aa).

Residues 12–32 form a helical membrane-spanning segment; that stretch reads GITLFPYFAILILILAILVVG. The interval 19–31 is hydrophobic; it reads FAILILILAILVV.

The protein resides in the membrane. This is an uncharacterized protein from Chenopodium amaranticolor (Quinoa).